We begin with the raw amino-acid sequence, 73 residues long: MSDVNKKFDSKKDQLSGKAKEVEGKVTGDRAREAQGKTQSLMGKAKDKLADAEETVKGVVDEAKDKMKKKSDD.

2 stretches are compositionally biased toward basic and acidic residues: residues 1–35 (MSDVNKKFDSKKDQLSGKAKEVEGKVTGDRAREAQ) and 44–73 (KAKDKLADAEETVKGVVDEAKDKMKKKSDD). Residues 1 to 73 (MSDVNKKFDS…KDKMKKKSDD (73 aa)) are disordered.

This sequence belongs to the UPF0337 (CsbD) family.

This chain is UPF0337 protein lp_1708, found in Lactiplantibacillus plantarum (strain ATCC BAA-793 / NCIMB 8826 / WCFS1) (Lactobacillus plantarum).